The sequence spans 499 residues: Probable alpha-L-arabinofuranosidase B (499 aa).

The signal sequence occupies residues 1-18 (MFSRRNLVALGLAATVSA). The tract at residues 19–335 (GPCDIYEAGD…ENIVAAKYVS (317 aa)) is catalytic. 3 cysteine pairs are disulfide-bonded: Cys21–Cys31, Cys81–Cys86, and Cys176–Cys177. An N-linked (GlcNAc...) asparagine glycan is attached at Asn83. Asn202 is a glycosylation site (N-linked (GlcNAc...) asparagine). Asp219 lines the substrate pocket. Catalysis depends on Glu221, which acts as the Nucleophile. Residues Asn222, Asn223, and Gly296 each coordinate substrate. The active-site Proton donor is the Asp297. The tract at residues 336–499 (GSLVSGPSFT…SFEIETAFAS (164 aa)) is ABD. A disulfide bridge connects residues Cys401 and Cys439. Residues His416, Asn418, Phe419, Asp435, His463, Asp465, Leu468, and Asp488 each contribute to the substrate site.

This sequence belongs to the glycosyl hydrolase 54 family.

It is found in the secreted. It catalyses the reaction Hydrolysis of terminal non-reducing alpha-L-arabinofuranoside residues in alpha-L-arabinosides.. The protein operates within glycan metabolism; L-arabinan degradation. Alpha-L-arabinofuranosidase involved in the degradation of arabinoxylan, a major component of plant hemicellulose. Able to hydrolyze 1,5-, 1,3- and 1,2-alpha-linkages not only in L-arabinofuranosyl oligosaccharides, but also in polysaccharides containing terminal non-reducing L-arabinofuranoses in side chains, like L-arabinan, arabinogalactan and arabinoxylan. This chain is Probable alpha-L-arabinofuranosidase B (abfB), found in Aspergillus niger (strain ATCC MYA-4892 / CBS 513.88 / FGSC A1513).